We begin with the raw amino-acid sequence, 303 residues long: Putative 1-phosphofructokinase (303 aa).

ATP-binding positions include 217-222 (SDGDKG) and 249-250 (GD). Asp-250 functions as the Proton acceptor in the catalytic mechanism.

Belongs to the carbohydrate kinase PfkB family.

The enzyme catalyses beta-D-fructose 1-phosphate + ATP = beta-D-fructose 1,6-bisphosphate + ADP + H(+). In terms of biological role, catalyzes the ATP-dependent phosphorylation of fructose-l-phosphate to fructose-l,6-bisphosphate. The polypeptide is Putative 1-phosphofructokinase (fruK) (Mycoplasma genitalium (strain ATCC 33530 / DSM 19775 / NCTC 10195 / G37) (Mycoplasmoides genitalium)).